A 461-amino-acid chain; its full sequence is Divalent metal cation transporter MntH (461 aa).

11 helical membrane passes run 56 to 76, 89 to 109, 132 to 152, 160 to 180, 193 to 213, 230 to 250, 285 to 305, 322 to 342, 378 to 398, 399 to 419, and 433 to 453; these read AMAFFGPGYLVAVGYMDPGNW, TLLAVALVSNIMAIVLQSLCA, AMVLWLLAEIAIIATDIAEVI, LIFGIPLELGVLITALDVFLI, ALVITLLGVIAVCFAIQLALA, IVTNPDMLYLALGILGATVMP, IALMFALLINASILILAAATF, LLAPLLGLAIAPTLFGVALLC, AIAIVPAAGVTIFYGDSGTGQ, LLILTQVVLSLQLSFAVFPLV, and SPLWLSAIAWLIAVVIAALNV.

This sequence belongs to the NRAMP family.

The protein resides in the cell inner membrane. In terms of biological role, h(+)-stimulated, divalent metal cation uptake system. In Agrobacterium fabrum (strain C58 / ATCC 33970) (Agrobacterium tumefaciens (strain C58)), this protein is Divalent metal cation transporter MntH.